Consider the following 419-residue polypeptide: Hyaluronan synthase (419 aa).

Transmembrane regions (helical) follow at residues 8–28, 33–53, 318–338, 345–365, and 376–396; these read LIVLSFIFLISILIYLNMYLF, VGIYGVILITYLVIKLGLSFL, IVALWTIFEVVMFMMLIVAIG, AIQLDLIKLFAFLSIIFIVAL, and PASFLLSPLYGILHLFVLQPL.

This sequence belongs to the NodC/HAS family. It depends on Mg(2+) as a cofactor.

The protein resides in the cell membrane. It carries out the reaction [hyaluronan](n) + UDP-N-acetyl-alpha-D-glucosamine = N-acetyl-beta-D-glucosaminyl-(1-&gt;4)-[hyaluronan](n) + UDP + H(+). It catalyses the reaction N-acetyl-beta-D-glucosaminyl-(1-&gt;4)-[hyaluronan](n) + UDP-alpha-D-glucuronate = [hyaluronan](n+1) + UDP + H(+). It participates in glycan biosynthesis; hyaluronan biosynthesis. Its function is as follows. Glycosaminoglycan synthesis. The hyaluronic acid capsule is involved in the pathogenicity of group A Streptococci; it may be the major virulence determinant. The sequence is that of Hyaluronan synthase (hasA) from Streptococcus pyogenes serotype M1.